The primary structure comprises 89 residues: Small ribosomal subunit protein bS20 (89 aa).

It belongs to the bacterial ribosomal protein bS20 family.

In terms of biological role, binds directly to 16S ribosomal RNA. In Sulfurovum sp. (strain NBC37-1), this protein is Small ribosomal subunit protein bS20.